Here is an 820-residue protein sequence, read N- to C-terminus: Leucine--tRNA ligase (820 aa).

The short motif at 42–52 (PYPSGDLHMGH) is the 'HIGH' region element. Residues 576–580 (KMSKS) carry the 'KMSKS' region motif. Residue lysine 579 participates in ATP binding.

The protein belongs to the class-I aminoacyl-tRNA synthetase family.

It is found in the cytoplasm. It catalyses the reaction tRNA(Leu) + L-leucine + ATP = L-leucyl-tRNA(Leu) + AMP + diphosphate. The chain is Leucine--tRNA ligase from Coxiella burnetii (strain RSA 331 / Henzerling II).